Here is a 218-residue protein sequence, read N- to C-terminus: Adenylate kinase (218 aa).

10–15 is a binding site for ATP; it reads GAGKGT. Positions 30–59 are NMP; it reads STGDMLRAAVKAGTPLGLEAKKVMDAGGLV. Residues Thr31, Arg36, 57–59, 85–88, and Gln92 contribute to the AMP site; these read GLV and GFPR. The segment at 122 to 159 is LID; it reads GRRVHVASGRTYHVKFNPPKVAGKDDETGEDLIQRADD. ATP is bound by residues Arg123 and 132–133; that span reads TY. The AMP site is built by Arg156 and Arg167. Gly203 is an ATP binding site.

The protein belongs to the adenylate kinase family. In terms of assembly, monomer.

It is found in the cytoplasm. The catalysed reaction is AMP + ATP = 2 ADP. Its pathway is purine metabolism; AMP biosynthesis via salvage pathway; AMP from ADP: step 1/1. Catalyzes the reversible transfer of the terminal phosphate group between ATP and AMP. Plays an important role in cellular energy homeostasis and in adenine nucleotide metabolism. This Laribacter hongkongensis (strain HLHK9) protein is Adenylate kinase.